We begin with the raw amino-acid sequence, 1066 residues long: DNA-directed RNA polymerase subunit beta (1066 aa).

It belongs to the RNA polymerase beta chain family. In terms of assembly, in plastids the minimal PEP RNA polymerase catalytic core is composed of four subunits: alpha, beta, beta', and beta''. When a (nuclear-encoded) sigma factor is associated with the core the holoenzyme is formed, which can initiate transcription.

It is found in the plastid. Its subcellular location is the chloroplast. The catalysed reaction is RNA(n) + a ribonucleoside 5'-triphosphate = RNA(n+1) + diphosphate. DNA-dependent RNA polymerase catalyzes the transcription of DNA into RNA using the four ribonucleoside triphosphates as substrates. The protein is DNA-directed RNA polymerase subunit beta of Psilotum nudum (Whisk fern).